The chain runs to 249 residues: 2,3-bisphosphoglycerate-dependent phosphoglycerate mutase (249 aa).

Residues 9–16, 22–23, Arg-61, 88–91, Lys-99, 115–116, and 184–185 contribute to the substrate site; these read RHGQSQWN, TG, ERHY, RR, and GN. His-10 serves as the catalytic Tele-phosphohistidine intermediate. The Proton donor/acceptor role is filled by Glu-88.

The protein belongs to the phosphoglycerate mutase family. BPG-dependent PGAM subfamily. As to quaternary structure, homodimer.

It carries out the reaction (2R)-2-phosphoglycerate = (2R)-3-phosphoglycerate. It participates in carbohydrate degradation; glycolysis; pyruvate from D-glyceraldehyde 3-phosphate: step 3/5. Catalyzes the interconversion of 2-phosphoglycerate and 3-phosphoglycerate. The sequence is that of 2,3-bisphosphoglycerate-dependent phosphoglycerate mutase from Xanthomonas oryzae pv. oryzae (strain MAFF 311018).